A 64-amino-acid chain; its full sequence is Large ribosomal subunit protein bL35 (64 aa).

This sequence belongs to the bacterial ribosomal protein bL35 family.

This chain is Large ribosomal subunit protein bL35, found in Pseudomonas putida (strain W619).